Here is a 690-residue protein sequence, read N- to C-terminus: Iron-sulfur clusters transporter ATM1, mitochondrial (690 aa).

Residues 1-26 (MLLLPRCPVIGRIVRSKFRSGLIRNH) constitute a mitochondrion transit peptide. Over 27–110 (SPVIFTVSKL…PKGNNKVRIR (84 aa)) the chain is Mitochondrial matrix. A helical transmembrane segment spans residues 111 to 132 (VLIALGLLISAKILNVQVPFFF). The region spanning 111-401 (VLIALGLLIS…LGSVYRDLKQ (291 aa)) is the ABC transmembrane type-1 domain. Topologically, residues 133–155 (KQTIDSMNIAWDDPTVALPAAIG) are mitochondrial intermembrane. A helical transmembrane segment spans residues 156–179 (LTILCYGVARFGSVLFGELRNAVF). Over 180 to 228 (AKVAQNAIRTVSLQTFQHLMKLDLGWHLSRQTGGLTRAMDRGTKGISQV) the chain is Mitochondrial matrix. A helical transmembrane segment spans residues 229-252 (LTAMVFHIIPISFEISVVCGILTY). Position 253 (Gln253) is a topological domain, mitochondrial intermembrane. A helical membrane pass occupies residues 254–274 (FGASFAAITFSTMLLYSIFTI). Residues 275–340 (KTTAWRTHFR…SQIKVSQSLA (66 aa)) lie on the Mitochondrial matrix side of the membrane. Glutathione contacts are provided by residues 280–284 (RTHFR) and 343–346 (NSGQ). Residues 341–359 (FLNSGQNLIFTTALTAMMY) form a helical membrane-spanning segment. Residues 360–374 (MGCTGVIGGNLTVGD) are Mitochondrial intermembrane-facing. A helical membrane pass occupies residues 375–396 (LVLINQLVFQLSVPLNFLGSVY). Gly393 provides a ligand contact to glutathione. Over 397–690 (RDLKQSLIDM…ENELKDQQEL (294 aa)) the chain is Mitochondrial matrix. Positions 436-672 (ITFENVTFGY…PGSLYRELWT (237 aa)) constitute an ABC transporter domain. Residues Tyr445 and 469 to 480 (GSSGSGKSTILK) contribute to the ATP site.

It belongs to the ABC transporter superfamily. ABCB family. Heavy Metal importer (TC 3.A.1.210) subfamily. In terms of assembly, homodimer.

Its subcellular location is the mitochondrion inner membrane. Its function is as follows. Performs an essential function in the generation of cytoplasmic iron-sulfur proteins by mediating the ATP-dependent export of Fe/S cluster precursors synthesized by NFS1 and other mitochondrial proteins. Hydrolyzes ATP. Binds glutathione and may function by transporting a glutathione-conjugated iron-sulfur compound. In Saccharomyces cerevisiae (strain ATCC 204508 / S288c) (Baker's yeast), this protein is Iron-sulfur clusters transporter ATM1, mitochondrial.